A 312-amino-acid polypeptide reads, in one-letter code: Acetyl-coenzyme A carboxylase carboxyl transferase subunit alpha (312 aa).

In terms of domain architecture, CoA carboxyltransferase C-terminal spans 36-286 (RLDKEVKSIY…KEYFLDALRT (251 aa)).

This sequence belongs to the AccA family. In terms of assembly, acetyl-CoA carboxylase is a heterohexamer composed of biotin carboxyl carrier protein (AccB), biotin carboxylase (AccC) and two subunits each of ACCase subunit alpha (AccA) and ACCase subunit beta (AccD).

Its subcellular location is the cytoplasm. It catalyses the reaction N(6)-carboxybiotinyl-L-lysyl-[protein] + acetyl-CoA = N(6)-biotinyl-L-lysyl-[protein] + malonyl-CoA. The protein operates within lipid metabolism; malonyl-CoA biosynthesis; malonyl-CoA from acetyl-CoA: step 1/1. Component of the acetyl coenzyme A carboxylase (ACC) complex. First, biotin carboxylase catalyzes the carboxylation of biotin on its carrier protein (BCCP) and then the CO(2) group is transferred by the carboxyltransferase to acetyl-CoA to form malonyl-CoA. This is Acetyl-coenzyme A carboxylase carboxyl transferase subunit alpha from Helicobacter pylori (strain ATCC 700392 / 26695) (Campylobacter pylori).